The following is a 565-amino-acid chain: MTSTTPKSPAAFTRHRDGEIRAARGTQLTAKSWMTEAPLRMLMNNLDPQVAENPTELVVYGGIGRAARNWECYDKIVESLTNLNDDETLLVQSGKPVGVFKTHSNAPRVLIANSNLVPHWATWEHFNELDAKGLAMYGQMTAGSWINIGSQGIVQGTYETFVEAGRQHYNGSLKGKWVLTAGLGGMGGAQPLAATLAGACSLNIECQQSRIDFRLATRYVDEQALDLDDALVRIAKYTAEGKAISIALCGNAAELLPEMVRRGVRPDMVTDQTSAHDPLNGYLPKGWTWEQYRDRAVTDPAAVVKAAKASMGEHVEAMLAFQKAGIPTFDYGNNIRQMAKEVGVENAFDFPGFVPAYIRPLFCRGVGPFRWVALSGDAEDIYKTDAKVKELIADDAHLHNWLDMARERISFQGLPARICWVGLGQRAKLGLAFNEMVRSGELKAPIVIGRDHLDSGSVSSPNRETESMKDGSDAVSDWPLLNALLNTASGATWVSLHHGGGVGMGFSQHSGMVIVCDGTDEAAERIARVLHNDPATGVMRHADAGYDIAIDCANEQGLNLPMING.

NAD(+)-binding positions include 61–62 (GG), Gln139, 185–187 (GMG), Glu205, Arg210, 251–252 (NA), 272–276 (QTSAH), 282–283 (YL), and Tyr331. Cys419 is an active-site residue. A disordered region spans residues 453-472 (LDSGSVSSPNRETESMKDGS). Basic and acidic residues predominate over residues 463 to 472 (RETESMKDGS). Gly501 is an NAD(+) binding site.

The protein belongs to the urocanase family. Requires NAD(+) as cofactor.

The protein resides in the cytoplasm. It carries out the reaction 4-imidazolone-5-propanoate = trans-urocanate + H2O. It participates in amino-acid degradation; L-histidine degradation into L-glutamate; N-formimidoyl-L-glutamate from L-histidine: step 2/3. Catalyzes the conversion of urocanate to 4-imidazolone-5-propionate. The chain is Urocanate hydratase from Pseudomonas syringae.